We begin with the raw amino-acid sequence, 248 residues long: Pyridoxine 5'-phosphate synthase (248 aa).

A 3-amino-2-oxopropyl phosphate-binding site is contributed by asparagine 12. 14-15 (DH) contacts 1-deoxy-D-xylulose 5-phosphate. Position 23 (arginine 23) interacts with 3-amino-2-oxopropyl phosphate. Histidine 48 acts as the Proton acceptor in catalysis. 2 residues coordinate 1-deoxy-D-xylulose 5-phosphate: arginine 50 and histidine 55. Glutamate 75 acts as the Proton acceptor in catalysis. Residue threonine 105 coordinates 1-deoxy-D-xylulose 5-phosphate. Histidine 196 (proton donor) is an active-site residue. Residues glycine 197 and 218-219 (GH) contribute to the 3-amino-2-oxopropyl phosphate site.

The protein belongs to the PNP synthase family. Homooctamer; tetramer of dimers.

The protein localises to the cytoplasm. It carries out the reaction 3-amino-2-oxopropyl phosphate + 1-deoxy-D-xylulose 5-phosphate = pyridoxine 5'-phosphate + phosphate + 2 H2O + H(+). The protein operates within cofactor biosynthesis; pyridoxine 5'-phosphate biosynthesis; pyridoxine 5'-phosphate from D-erythrose 4-phosphate: step 5/5. Its function is as follows. Catalyzes the complicated ring closure reaction between the two acyclic compounds 1-deoxy-D-xylulose-5-phosphate (DXP) and 3-amino-2-oxopropyl phosphate (1-amino-acetone-3-phosphate or AAP) to form pyridoxine 5'-phosphate (PNP) and inorganic phosphate. The chain is Pyridoxine 5'-phosphate synthase from Pseudomonas aeruginosa (strain LESB58).